Here is a 533-residue protein sequence, read N- to C-terminus: Tyrosine decarboxylase (533 aa).

The disordered stretch occupies residues 1–22 (MAPPSHCHTINGGAPRNGAIPE). 2 residues coordinate pyridoxal 5'-phosphate: threonine 281 and asparagine 336. Lysine 339 carries the post-translational modification N6-(pyridoxal phosphate)lysine.

This sequence belongs to the group II decarboxylase family. Pyridoxal 5'-phosphate serves as cofactor.

It catalyses the reaction L-tyrosine + H(+) = tyramine + CO2. Functionally, catalyzes the decarboxylation of L-tyrosine to tyramine, which can be converted to the hydroxycinnamic acid amides feruloyltyramine and 4-coumaroyltyramine. Possesses low tryptophan decarboxylase activity. This chain is Tyrosine decarboxylase, found in Oryza sativa subsp. japonica (Rice).